The sequence spans 484 residues: UDP-N-acetylmuramate--L-alanine ligase (484 aa).

124 to 130 contributes to the ATP binding site; sequence GTHGKTT.

It belongs to the MurCDEF family.

It localises to the cytoplasm. The enzyme catalyses UDP-N-acetyl-alpha-D-muramate + L-alanine + ATP = UDP-N-acetyl-alpha-D-muramoyl-L-alanine + ADP + phosphate + H(+). Its pathway is cell wall biogenesis; peptidoglycan biosynthesis. In terms of biological role, cell wall formation. The chain is UDP-N-acetylmuramate--L-alanine ligase from Pseudoalteromonas atlantica (strain T6c / ATCC BAA-1087).